A 118-amino-acid polypeptide reads, in one-letter code: Vitelline membrane protein Vm32E (118 aa).

The first 17 residues, 1 to 17 (MKIVALTLVAFVALAGA), serve as a signal peptide directing secretion. A VM domain is found at 36–75 (GYPAPPCPTNYLFSCQPNLAPAPCAQEAQAPAYGSAGAYT).

Belongs to the vitelline membrane family.

The protein localises to the secreted. Major early eggshell protein. The chain is Vitelline membrane protein Vm32E from Drosophila simulans (Fruit fly).